Reading from the N-terminus, the 402-residue chain is NADH-quinone oxidoreductase subunit D (402 aa).

It belongs to the complex I 49 kDa subunit family. In terms of assembly, NDH-1 is composed of 14 different subunits. Subunits NuoB, C, D, E, F, and G constitute the peripheral sector of the complex.

It is found in the cell inner membrane. The catalysed reaction is a quinone + NADH + 5 H(+)(in) = a quinol + NAD(+) + 4 H(+)(out). NDH-1 shuttles electrons from NADH, via FMN and iron-sulfur (Fe-S) centers, to quinones in the respiratory chain. The immediate electron acceptor for the enzyme in this species is believed to be ubiquinone. Couples the redox reaction to proton translocation (for every two electrons transferred, four hydrogen ions are translocated across the cytoplasmic membrane), and thus conserves the redox energy in a proton gradient. This chain is NADH-quinone oxidoreductase subunit D, found in Maricaulis maris (strain MCS10) (Caulobacter maris).